The following is a 482-amino-acid chain: MKFIIKLFPEITIKSQSVRLRFIKILTGNIRNVLKHYDETLAVVRHWDNIEVRAKDENQRLAIRDALTRIPGIHHILEVEDVPFTDMHDIFEKALVQYRDQLEGKTFCVRVKRRGKHDFSSIDVERYVGGGLNQHIESARVKLTNPEVTVHLEVEDDRLLLIKGRYEGIGGFPIGTQEDVLSLISGGFDSGVSSYMLMRRGCRVHYCFFNLGGAAHEIGVRQVAHYLWNRFGSSHRVRFVAINFEPVVGEILEKIDDGQMGVILKRMMVRAASKVAERYGVQALVTGEALGQVSSQTLTNLRLIDNVSDTLILRPLISYDKEHIINLARQIGTEDFARTMPEYCGVISKSPTVKAVKSKIEAEEEKFDFSILDKVVEEANNVDIREIAQQTEQEVVEVETVNGFGPNDVILDIRSIDEQEDKPLKVEGIDVVSLPFYKLSTKFGDLDQNRTWLLWCERGVMSRLQALYLREQGFNNVKVYRP.

One can recognise a THUMP domain in the interval 61–165; that stretch reads LAIRDALTRI…DDRLLLIKGR (105 aa). Residues 183–184, Lys-265, Gly-287, and Gln-296 contribute to the ATP site; that span reads LI. Cys-344 and Cys-456 are oxidised to a cystine. The Rhodanese domain maps to 404–482; it reads FGPNDVILDI…GFNNVKVYRP (79 aa). The active-site Cysteine persulfide intermediate is Cys-456.

Belongs to the ThiI family.

Its subcellular location is the cytoplasm. The enzyme catalyses [ThiI sulfur-carrier protein]-S-sulfanyl-L-cysteine + a uridine in tRNA + 2 reduced [2Fe-2S]-[ferredoxin] + ATP + H(+) = [ThiI sulfur-carrier protein]-L-cysteine + a 4-thiouridine in tRNA + 2 oxidized [2Fe-2S]-[ferredoxin] + AMP + diphosphate. It carries out the reaction [ThiS sulfur-carrier protein]-C-terminal Gly-Gly-AMP + S-sulfanyl-L-cysteinyl-[cysteine desulfurase] + AH2 = [ThiS sulfur-carrier protein]-C-terminal-Gly-aminoethanethioate + L-cysteinyl-[cysteine desulfurase] + A + AMP + 2 H(+). Its pathway is cofactor biosynthesis; thiamine diphosphate biosynthesis. Functionally, catalyzes the ATP-dependent transfer of a sulfur to tRNA to produce 4-thiouridine in position 8 of tRNAs, which functions as a near-UV photosensor. Also catalyzes the transfer of sulfur to the sulfur carrier protein ThiS, forming ThiS-thiocarboxylate. This is a step in the synthesis of thiazole, in the thiamine biosynthesis pathway. The sulfur is donated as persulfide by IscS. This Escherichia coli (strain 55989 / EAEC) protein is tRNA sulfurtransferase.